Reading from the N-terminus, the 114-residue chain is Putative antiporter subunit mnhC2 (114 aa).

The next 3 helical transmembrane spans lie at leucine 3–isoleucine 23, isoleucine 28–threonine 48, and alanine 72–valine 92.

The protein belongs to the CPA3 antiporters (TC 2.A.63) subunit C family. As to quaternary structure, may form a heterooligomeric complex that consists of seven subunits: mnhA2, mnhB2, mnhC2, mnhD2, mnhE2, mnhF2 and mnhG2.

It localises to the cell membrane. In Staphylococcus aureus (strain Mu3 / ATCC 700698), this protein is Putative antiporter subunit mnhC2 (mnhC2).